A 284-amino-acid polypeptide reads, in one-letter code: D-tagatose-1,6-bisphosphate aldolase subunit GatY (284 aa).

Asp-82 serves as the catalytic Proton donor. Zn(2+)-binding residues include His-83 and His-180. Dihydroxyacetone phosphate is bound at residue Gly-181. His-208 is a binding site for Zn(2+). Residues 209 to 211 (GAS) and 230 to 233 (NVAT) each bind dihydroxyacetone phosphate.

It belongs to the class II fructose-bisphosphate aldolase family. TagBP aldolase GatY subfamily. As to quaternary structure, forms a complex with GatZ. It depends on Zn(2+) as a cofactor.

The catalysed reaction is D-tagatofuranose 1,6-bisphosphate = D-glyceraldehyde 3-phosphate + dihydroxyacetone phosphate. The protein operates within carbohydrate metabolism; D-tagatose 6-phosphate degradation; D-glyceraldehyde 3-phosphate and glycerone phosphate from D-tagatose 6-phosphate: step 2/2. Functionally, catalytic subunit of the tagatose-1,6-bisphosphate aldolase GatYZ, which catalyzes the reversible aldol condensation of dihydroxyacetone phosphate (DHAP or glycerone-phosphate) with glyceraldehyde 3-phosphate (G3P) to produce tagatose 1,6-bisphosphate (TBP). Requires GatZ subunit for full activity and stability. Is involved in the catabolism of galactitol. This is D-tagatose-1,6-bisphosphate aldolase subunit GatY from Escherichia coli O6:K15:H31 (strain 536 / UPEC).